The primary structure comprises 461 residues: Glutamate-gated chloride channel alpha (461 aa).

Positions 1 to 20 (MATWIVGKLIIASLILGIQA) are cleaved as a signal peptide. The Extracellular segment spans residues 21-275 (QQARTKSQDI…TTIQLKREFS (255 aa)). L-glutamate contacts are provided by Arg98, Arg117, and Ser182. Cys191 and Cys205 are disulfide-bonded. Residue Ser211 participates in L-glutamate binding. An N-linked (GlcNAc...) asparagine glycan is attached at Asn246. Residues Cys252 and Cys263 are joined by a disulfide bond. The chain crosses the membrane as a helical span at residues 276–298 (FYLLQLYIPSCMLVIVSWVSFWF). Topologically, residues 299-303 (DRTAI) are cytoplasmic. The helical transmembrane segment at 304–325 (PARVTLGVTTLLTMTAQSAGIN) threads the bilayer. At 326–332 (SQLPPVS) the chain is on the extracellular side. A helical membrane pass occupies residues 333–353 (YIKAIDVWIGACMTFIFCALL). Topologically, residues 354–432 (EFALVNHIAN…EWNDISKRVD (79 aa)) are cytoplasmic. A helical membrane pass occupies residues 433-454 (LISRALFPVLFFVFNILYWSRF). Residues 455 to 461 (GQQNVLF) are Extracellular-facing.

This sequence belongs to the ligand-gated ion channel (TC 1.A.9) family. Glutamate-gated chloride channel (TC 1.A.9.4) subfamily. Pentamer. Homooligomer, forms functional heterooligomers with glc-2.

The protein localises to the postsynaptic cell membrane. Its subcellular location is the cell membrane. Glutamate-gated chloride channel subunit; channel properties depend on the subunit composition. Glutamate binding triggers a rapidly reversible current in heteromeric channels formed by glc-1 and glc-2, while the anti-helmintic drug ivermectin and other avermectins trigger a permanently open channel configuration. Channels containing only glc-1 are activated by ivermectin, but not by glutamate alone (in vitro). The heteromeric channel formed by glc-1 and glc-2 is also activated by ibotenate, and it is blocked by picrotoxin and flufenamic acid. Plays a role in the regulation of locomotor behavior. This Caenorhabditis elegans protein is Glutamate-gated chloride channel alpha.